Consider the following 607-residue polypeptide: Runt-related transcription factor 2 (607 aa).

An interaction with IFI204 region spans residues Met1 to Ala88. Positions Pro100 to Ser112 are enriched in low complexity. The interval Pro100–Ala126 is disordered. The Runt domain maps to Thr187 to Arg315. The segment at Val242–Ser258 is required for interaction with FOXO1. The tract at residues Val307–Thr430 is disordered. Residue Lys324 forms a Glycyl lysine isopeptide (Lys-Gly) (interchain with G-Cter in SUMO2) linkage. The residue at position 353 (Arg353) is an Asymmetric dimethylarginine. A compositionally biased stretch (polar residues) spans Arg353–Gly412. Residues Pro422–Thr525 form an interaction with KAT6A region. The segment at Arg460–Arg554 is interaction with KAT6B. Residue Ser537 is modified to Phosphoserine; by CDK1. The segment at Gly548 to Tyr607 is disordered. Polar residues-rich tracts occupy residues Cys559–Asp578 and Ser585–Gly597. The segment covering Arg598–Tyr607 has biased composition (basic and acidic residues).

In terms of assembly, heterodimer of an alpha and a beta subunit. The alpha subunit binds DNA as a monomer and through the Runt domain. DNA-binding is increased by heterodimerization. Interacts with XRCC6 (Ku70) and XRCC5 (Ku80). Interacts with CCNB1, KAT6A and KAT6B. Interacts with HIVEP3. Interacts with IFI204. Interaction with SATB2; the interaction results in enhanced DNA binding and transactivation by these transcription factors. Binds to HIPK3. Interacts with FOXO1 (via a C-terminal region); the interaction inhibits RUNX2 transcriptional activity towards BGLAP. Interacts with FOXP3. Interacts with TMEM119. Interacts with OLFM2. Interacts with IPO7; the interaction inhibits RUNX2 nuclear translocation in osteoblasts. As to quaternary structure, interacts with DDX5. Phosphorylated; probably by MAP kinases (MAPK). Phosphorylation by HIPK3 is required for the SPEN/MINT and FGF2 transactivation during osteoblastic differentiation. Phosphorylation at Ser-537 by CDK1 promotes endothelial cell proliferation required for tumor angiogenesis probably by facilitating cell cycle progression. Found in thymus and testis, T-cell lines but not in B-cell lines. Isoform 2 is exclusively found in bone, particularly in osteoblasts; isoforms 3 and 4 are expressed in T-cell lines; isoforms 5, 6, 7, 8 and 9 can be found in osteoblasts and osteosarcoma cell lines.

It is found in the nucleus. Its subcellular location is the cytoplasm. Its function is as follows. Transcription factor involved in osteoblastic differentiation and skeletal morphogenesis. Essential for the maturation of osteoblasts and both intramembranous and endochondral ossification. CBF binds to the core site, 5'-PYGPYGGT-3', of a number of enhancers and promoters, including murine leukemia virus, polyomavirus enhancer, T-cell receptor enhancers, osteocalcin, osteopontin, bone sialoprotein, alpha 1(I) collagen, LCK, IL-3 and GM-CSF promoters. Inhibits KAT6B-dependent transcriptional activation. In osteoblasts, supports transcription activation: synergizes with SPEN/MINT to enhance FGFR2-mediated activation of the osteocalcin FGF-responsive element (OCFRE). The protein is Runt-related transcription factor 2 (Runx2) of Mus musculus (Mouse).